The primary structure comprises 278 residues: uncharacterized protein (278 aa).

The region spanning 1–55 (MKIRERFSMVDLPVLIITAAIIGHDKYKAFHAGANDILQKPYHYSEFMARIQNLI) is the Response regulatory domain.

This is an uncharacterized protein from Bacillus subtilis (strain 168).